Reading from the N-terminus, the 224-residue chain is EEF1A lysine methyltransferase 3 (224 aa).

S-adenosyl-L-methionine contacts are provided by residues W58, 84–86 (GAG), D105, W134, and A151.

It belongs to the methyltransferase superfamily. METTL21 family.

The protein localises to the cytoplasm. The protein resides in the cytoskeleton. Its subcellular location is the microtubule organizing center. It is found in the centrosome. It catalyses the reaction L-lysyl-[protein] + 3 S-adenosyl-L-methionine = N(6),N(6),N(6)-trimethyl-L-lysyl-[protein] + 3 S-adenosyl-L-homocysteine + 3 H(+). It carries out the reaction L-lysyl-[protein] + S-adenosyl-L-methionine = N(6)-methyl-L-lysyl-[protein] + S-adenosyl-L-homocysteine + H(+). The catalysed reaction is N(6)-methyl-L-lysyl-[protein] + S-adenosyl-L-methionine = N(6),N(6)-dimethyl-L-lysyl-[protein] + S-adenosyl-L-homocysteine + H(+). The enzyme catalyses N(6),N(6)-dimethyl-L-lysyl-[protein] + S-adenosyl-L-methionine = N(6),N(6),N(6)-trimethyl-L-lysyl-[protein] + S-adenosyl-L-homocysteine + H(+). Protein-lysine methyltransferase that selectively mono-, di- and trimethylates 'Lys-165' of the translation elongation factors EEF1A1 and EEF1A2 in an aminoacyl-tRNA and GTP-dependent manner. EEF1A1 methylation by EEF1AKMT3 is dynamic as well as inducible by stress conditions, such as ER-stress, and plays a regulatory role on mRNA translation. The polypeptide is EEF1A lysine methyltransferase 3 (Xenopus tropicalis (Western clawed frog)).